The chain runs to 731 residues: Cucumisin (731 aa).

The signal sequence occupies residues 1–22 (MSSSLIFKLFFFSLFFSNRLAS). Residues 23–110 (RLDSDDDGKN…VFLNEMNELH (88 aa)) constitute a propeptide, activation peptide. The region spanning 34-110 (YIVYMGRKLE…VFLNEMNELH (77 aa)) is the Inhibitor I9 domain. A Peptidase S8 domain is found at 114-584 (SWDFLGFPLT…SGHVNPLKAV (471 aa)). Aspartate 140 (charge relay system) is an active-site residue. Cysteine 166 and cysteine 174 are oxidised to a cystine. The Charge relay system role is filled by histidine 204. 2 disulfides stabilise this stretch: cysteine 245–cysteine 250 and cysteine 380–cysteine 397. Asparagine 466 carries an N-linked (GlcNAc...) asparagine glycan. Serine 525 (charge relay system) is an active-site residue. A propeptide spanning residues 616 to 731 (GDYSACTSGN…RSPITITSLV (116 aa)) is cleaved from the precursor. Asparagine 652 carries an N-linked (GlcNAc...) asparagine glycan.

The protein belongs to the peptidase S8 family. Monomer and dimer. Post-translationally, the C-terminal propeptide is autocleaved. Specifically expressed in fruits. Expressed in sarcocarp (at protein level).

Its subcellular location is the secreted. The enzyme catalyses Hydrolysis of proteins with broad specificity.. The polypeptide is Cucumisin (Cucumis melo (Muskmelon)).